The following is a 446-amino-acid chain: Histidine--tRNA ligase (446 aa).

Belongs to the class-II aminoacyl-tRNA synthetase family. As to quaternary structure, homodimer.

The protein resides in the cytoplasm. It catalyses the reaction tRNA(His) + L-histidine + ATP = L-histidyl-tRNA(His) + AMP + diphosphate + H(+). The chain is Histidine--tRNA ligase from Burkholderia cenocepacia (strain ATCC BAA-245 / DSM 16553 / LMG 16656 / NCTC 13227 / J2315 / CF5610) (Burkholderia cepacia (strain J2315)).